A 299-amino-acid polypeptide reads, in one-letter code: GTPase Era (299 aa).

The Era-type G domain occupies 8–176; sequence RCGYVAIVGR…EKLVGERLPE (169 aa). Residues 16 to 23 form a G1 region; sequence GRPNVGKS. A GTP-binding site is contributed by 16-23; sequence GRPNVGKS. Residues 42–46 are G2; it reads QTTRH. The interval 63 to 66 is G3; it reads DTPG. GTP-binding positions include 63 to 67 and 125 to 128; these read DTPGL and NKAD. The tract at residues 125 to 128 is G4; it reads NKAD. Residues 155 to 157 form a G5 region; that stretch reads ISA. A KH type-2 domain is found at 199–283; that stretch reads IREKIMRQLG…MLNLWVKVKG (85 aa).

It belongs to the TRAFAC class TrmE-Era-EngA-EngB-Septin-like GTPase superfamily. Era GTPase family. In terms of assembly, monomer.

Its subcellular location is the cytoplasm. The protein localises to the cell inner membrane. Its function is as follows. An essential GTPase that binds both GDP and GTP, with rapid nucleotide exchange. Plays a role in 16S rRNA processing and 30S ribosomal subunit biogenesis and possibly also in cell cycle regulation and energy metabolism. The sequence is that of GTPase Era from Ectopseudomonas mendocina (strain ymp) (Pseudomonas mendocina).